A 305-amino-acid polypeptide reads, in one-letter code: Glycerol-3-phosphate dehydrogenase [NAD(P)+] (305 aa).

NADPH is bound by residues tryptophan 11, arginine 31, and lysine 79. Sn-glycerol 3-phosphate is bound by residues lysine 79 and glycine 107. Alanine 111 lines the NADPH pocket. Sn-glycerol 3-phosphate is bound by residues lysine 162, aspartate 215, serine 225, arginine 226, and asparagine 227. Lysine 162 serves as the catalytic Proton acceptor. Arginine 226 contributes to the NADPH binding site. Glutamate 252 serves as a coordination point for NADPH.

This sequence belongs to the NAD-dependent glycerol-3-phosphate dehydrogenase family.

It localises to the cytoplasm. It catalyses the reaction sn-glycerol 3-phosphate + NAD(+) = dihydroxyacetone phosphate + NADH + H(+). The catalysed reaction is sn-glycerol 3-phosphate + NADP(+) = dihydroxyacetone phosphate + NADPH + H(+). It functions in the pathway membrane lipid metabolism; glycerophospholipid metabolism. Its function is as follows. Catalyzes the reduction of the glycolytic intermediate dihydroxyacetone phosphate (DHAP) to sn-glycerol 3-phosphate (G3P), the key precursor for phospholipid synthesis. This Gloeobacter violaceus (strain ATCC 29082 / PCC 7421) protein is Glycerol-3-phosphate dehydrogenase [NAD(P)+].